Consider the following 154-residue polypeptide: Aspartate carbamoyltransferase regulatory chain (154 aa).

4 residues coordinate Zn(2+): C111, C116, C139, and C142.

It belongs to the PyrI family. As to quaternary structure, contains catalytic and regulatory chains. Zn(2+) is required as a cofactor.

Involved in allosteric regulation of aspartate carbamoyltransferase. The polypeptide is Aspartate carbamoyltransferase regulatory chain (Parabacteroides distasonis (strain ATCC 8503 / DSM 20701 / CIP 104284 / JCM 5825 / NCTC 11152)).